The sequence spans 334 residues: Dihydroorotate dehydrogenase (quinone) (334 aa).

FMN-binding positions include 61-65 (AGLDK) and T85. K65 provides a ligand contact to substrate. 110 to 114 (NRMGF) is a substrate binding site. N138 and N171 together coordinate FMN. N171 provides a ligand contact to substrate. The active-site Nucleophile is the S174. Substrate is bound at residue N176. The FMN site is built by K216 and T244. 245 to 246 (NT) provides a ligand contact to substrate. FMN-binding positions include G266, G295, and 316 to 317 (YT).

Belongs to the dihydroorotate dehydrogenase family. Type 2 subfamily. In terms of assembly, monomer. FMN is required as a cofactor.

Its subcellular location is the cell membrane. The enzyme catalyses (S)-dihydroorotate + a quinone = orotate + a quinol. The protein operates within pyrimidine metabolism; UMP biosynthesis via de novo pathway; orotate from (S)-dihydroorotate (quinone route): step 1/1. Its function is as follows. Catalyzes the conversion of dihydroorotate to orotate with quinone as electron acceptor. This chain is Dihydroorotate dehydrogenase (quinone), found in Idiomarina loihiensis (strain ATCC BAA-735 / DSM 15497 / L2-TR).